A 122-amino-acid polypeptide reads, in one-letter code: Large ribosomal subunit protein uL14 (122 aa).

It belongs to the universal ribosomal protein uL14 family. Part of the 50S ribosomal subunit. Forms a cluster with proteins L3 and L19. In the 70S ribosome, L14 and L19 interact and together make contacts with the 16S rRNA in bridges B5 and B8.

Binds to 23S rRNA. Forms part of two intersubunit bridges in the 70S ribosome. This chain is Large ribosomal subunit protein uL14, found in Methylibium petroleiphilum (strain ATCC BAA-1232 / LMG 22953 / PM1).